A 203-amino-acid chain; its full sequence is Probable nicotinate-nucleotide adenylyltransferase (203 aa).

The protein belongs to the NadD family.

It catalyses the reaction nicotinate beta-D-ribonucleotide + ATP + H(+) = deamido-NAD(+) + diphosphate. It participates in cofactor biosynthesis; NAD(+) biosynthesis; deamido-NAD(+) from nicotinate D-ribonucleotide: step 1/1. In terms of biological role, catalyzes the reversible adenylation of nicotinate mononucleotide (NaMN) to nicotinic acid adenine dinucleotide (NaAD). The protein is Probable nicotinate-nucleotide adenylyltransferase of Prosthecochloris aestuarii (strain DSM 271 / SK 413).